The chain runs to 550 residues: MAAKEVKFGDSARDRMVAGVNILANAVKVTLGPKGRNVVLERSFGAPTVTKDGVSVAKEIELKDKFENMGAQMVKEVASKTSDIAGDGTTTATVLAQSIVREGMKFVAAGMNPMDLKRGIDKAVIAVTEELKKLSKPCSTNKEIAQVGSISANSDADIGEIIAKSMDKVGKEGVITVEDGKSLQNELDVVEGMQFDRGYLSPYFINNPDKQVAILENPFILLFDKKISNIRDLLPVLEQVAKAGRPLLIVAEDVEGEALATLVVNNIRGILKTCSVKAPGFGDRRKAMLEDIAVLTGGQVIAEEVGLTLEKATLAELGQAARIEIGKENTIIIDGAGEGSRIEGRVKQIRAQIEEATSDYDREKLQERVAKLAGGVAVIKVGAATEVEMKEKKARVEDALHATRAAVEEGIVPGGGVALLRARANLGTLKGDNHDQDAGIKIVLRALEQPLREIVANAGDEPSVVVNRVVEGTGNFGYNAATGEYGDLVDMGVLDPTKVERIALQNAASVAGLMLTTDCMVGELAEEKPSMGGMGGMGGMGGMGGMDMGM.

ATP is bound by residues 30-33 (TLGP), Lys51, 87-91 (DGTTT), Gly415, 479-481 (NAA), and Asp495.

The protein belongs to the chaperonin (HSP60) family. Forms a cylinder of 14 subunits composed of two heptameric rings stacked back-to-back. Interacts with the co-chaperonin GroES.

Its subcellular location is the cytoplasm. It carries out the reaction ATP + H2O + a folded polypeptide = ADP + phosphate + an unfolded polypeptide.. Together with its co-chaperonin GroES, plays an essential role in assisting protein folding. The GroEL-GroES system forms a nano-cage that allows encapsulation of the non-native substrate proteins and provides a physical environment optimized to promote and accelerate protein folding. In Aromatoleum aromaticum (strain DSM 19018 / LMG 30748 / EbN1) (Azoarcus sp. (strain EbN1)), this protein is Chaperonin GroEL.